Reading from the N-terminus, the 278-residue chain is Digeranylgeranylglyceryl phosphate synthase (278 aa).

A run of 8 helical transmembrane segments spans residues 12–32, 34–54, 91–111, 129–149, 153–173, 204–224, 225–245, and 257–277; these read LKNC…ASYF, LATV…CGFG, LLVF…LMAV, IIGN…GGIA, IDVT…REII, FLLV…FFGI, YYML…YNLV, and SRNI…GSLF.

It belongs to the UbiA prenyltransferase family. DGGGP synthase subfamily. Mg(2+) is required as a cofactor.

The protein localises to the cell membrane. It carries out the reaction sn-3-O-(geranylgeranyl)glycerol 1-phosphate + (2E,6E,10E)-geranylgeranyl diphosphate = 2,3-bis-O-(geranylgeranyl)-sn-glycerol 1-phosphate + diphosphate. It participates in membrane lipid metabolism; glycerophospholipid metabolism. Functionally, prenyltransferase that catalyzes the transfer of the geranylgeranyl moiety of geranylgeranyl diphosphate (GGPP) to the C2 hydroxyl of (S)-3-O-geranylgeranylglyceryl phosphate (GGGP). This reaction is the second ether-bond-formation step in the biosynthesis of archaeal membrane lipids. The polypeptide is Digeranylgeranylglyceryl phosphate synthase (Methanococcus maripaludis (strain C7 / ATCC BAA-1331)).